The following is a 130-amino-acid chain: Small ribosomal subunit protein uS8 (130 aa).

Belongs to the universal ribosomal protein uS8 family. As to quaternary structure, part of the 30S ribosomal subunit. Contacts proteins S5 and S12.

Functionally, one of the primary rRNA binding proteins, it binds directly to 16S rRNA central domain where it helps coordinate assembly of the platform of the 30S subunit. The sequence is that of Small ribosomal subunit protein uS8 from Photobacterium profundum (strain SS9).